The sequence spans 251 residues: Imidazole glycerol phosphate synthase subunit HisF (251 aa).

Catalysis depends on residues Asp13 and Asp132.

Belongs to the HisA/HisF family. Heterodimer of HisH and HisF.

It is found in the cytoplasm. It carries out the reaction 5-[(5-phospho-1-deoxy-D-ribulos-1-ylimino)methylamino]-1-(5-phospho-beta-D-ribosyl)imidazole-4-carboxamide + L-glutamine = D-erythro-1-(imidazol-4-yl)glycerol 3-phosphate + 5-amino-1-(5-phospho-beta-D-ribosyl)imidazole-4-carboxamide + L-glutamate + H(+). It participates in amino-acid biosynthesis; L-histidine biosynthesis; L-histidine from 5-phospho-alpha-D-ribose 1-diphosphate: step 5/9. Functionally, IGPS catalyzes the conversion of PRFAR and glutamine to IGP, AICAR and glutamate. The HisF subunit catalyzes the cyclization activity that produces IGP and AICAR from PRFAR using the ammonia provided by the HisH subunit. The chain is Imidazole glycerol phosphate synthase subunit HisF from Campylobacter concisus (strain 13826).